A 564-amino-acid chain; its full sequence is Dihydroxy-acid dehydratase (564 aa).

Asp-78 contacts Mg(2+). Cys-119 contributes to the [2Fe-2S] cluster binding site. Asp-120 and Lys-121 together coordinate Mg(2+). An N6-carboxylysine modification is found at Lys-121. Position 192 (Cys-192) interacts with [2Fe-2S] cluster. Glu-451 provides a ligand contact to Mg(2+). The active-site Proton acceptor is Ser-477.

Belongs to the IlvD/Edd family. As to quaternary structure, homodimer. The cofactor is [2Fe-2S] cluster. Mg(2+) serves as cofactor.

The catalysed reaction is (2R)-2,3-dihydroxy-3-methylbutanoate = 3-methyl-2-oxobutanoate + H2O. It catalyses the reaction (2R,3R)-2,3-dihydroxy-3-methylpentanoate = (S)-3-methyl-2-oxopentanoate + H2O. It participates in amino-acid biosynthesis; L-isoleucine biosynthesis; L-isoleucine from 2-oxobutanoate: step 3/4. Its pathway is amino-acid biosynthesis; L-valine biosynthesis; L-valine from pyruvate: step 3/4. Its function is as follows. Functions in the biosynthesis of branched-chain amino acids. Catalyzes the dehydration of (2R,3R)-2,3-dihydroxy-3-methylpentanoate (2,3-dihydroxy-3-methylvalerate) into 2-oxo-3-methylpentanoate (2-oxo-3-methylvalerate) and of (2R)-2,3-dihydroxy-3-methylbutanoate (2,3-dihydroxyisovalerate) into 2-oxo-3-methylbutanoate (2-oxoisovalerate), the penultimate precursor to L-isoleucine and L-valine, respectively. The sequence is that of Dihydroxy-acid dehydratase from Nitratiruptor sp. (strain SB155-2).